A 393-amino-acid polypeptide reads, in one-letter code: Cysteine desulfurase (393 aa).

Pyridoxal 5'-phosphate-binding positions include 76-77 (GT), asparagine 155, glutamine 183, and 203-205 (SAH). Lysine 206 carries the post-translational modification N6-(pyridoxal phosphate)lysine. Residue threonine 241 coordinates pyridoxal 5'-phosphate. Cysteine 328 serves as the catalytic Cysteine persulfide intermediate. Cysteine 328 lines the [2Fe-2S] cluster pocket.

Belongs to the class-V pyridoxal-phosphate-dependent aminotransferase family. NifS/IscS subfamily. As to quaternary structure, homodimer. Pyridoxal 5'-phosphate serves as cofactor.

The enzyme catalyses (sulfur carrier)-H + L-cysteine = (sulfur carrier)-SH + L-alanine. Its function is as follows. Catalyzes the removal of elemental sulfur atoms from cysteine to produce alanine. Seems to participate in the biosynthesis of the nitrogenase metalloclusters by providing the inorganic sulfur required for the Fe-S core formation. The sequence is that of Cysteine desulfurase from Bradyrhizobium diazoefficiens (strain JCM 10833 / BCRC 13528 / IAM 13628 / NBRC 14792 / USDA 110).